We begin with the raw amino-acid sequence, 194 residues long: Type II methyltransferase M.MjaVI (194 aa).

It belongs to the N(4)/N(6)-methyltransferase family. N(4) subfamily.

The catalysed reaction is a 2'-deoxycytidine in DNA + S-adenosyl-L-methionine = an N(4)-methyl-2'-deoxycytidine in DNA + S-adenosyl-L-homocysteine + H(+). Functionally, a beta subtype methylase that recognizes the double-stranded sequence 5'-CCGG-3', methylates C-1 on both strands, and protects the DNA from cleavage by the MjaVI endonuclease. The sequence is that of Type II methyltransferase M.MjaVI (mjaVIM) from Methanocaldococcus jannaschii (strain ATCC 43067 / DSM 2661 / JAL-1 / JCM 10045 / NBRC 100440) (Methanococcus jannaschii).